Here is a 175-residue protein sequence, read N- to C-terminus: ATP synthase subunit delta (175 aa).

This sequence belongs to the ATPase delta chain family. In terms of assembly, F-type ATPases have 2 components, F(1) - the catalytic core - and F(0) - the membrane proton channel. F(1) has five subunits: alpha(3), beta(3), gamma(1), delta(1), epsilon(1). F(0) has three main subunits: a(1), b(2) and c(10-14). The alpha and beta chains form an alternating ring which encloses part of the gamma chain. F(1) is attached to F(0) by a central stalk formed by the gamma and epsilon chains, while a peripheral stalk is formed by the delta and b chains.

Its subcellular location is the cell inner membrane. Its function is as follows. F(1)F(0) ATP synthase produces ATP from ADP in the presence of a proton or sodium gradient. F-type ATPases consist of two structural domains, F(1) containing the extramembraneous catalytic core and F(0) containing the membrane proton channel, linked together by a central stalk and a peripheral stalk. During catalysis, ATP synthesis in the catalytic domain of F(1) is coupled via a rotary mechanism of the central stalk subunits to proton translocation. In terms of biological role, this protein is part of the stalk that links CF(0) to CF(1). It either transmits conformational changes from CF(0) to CF(1) or is implicated in proton conduction. The chain is ATP synthase subunit delta from Xanthomonas oryzae pv. oryzae (strain PXO99A).